Consider the following 105-residue polypeptide: UPF0145 protein lpl0253 (105 aa).

The protein belongs to the UPF0145 family.

The chain is UPF0145 protein lpl0253 from Legionella pneumophila (strain Lens).